A 176-amino-acid chain; its full sequence is Tubulin polymerization-promoting protein family member 3 (176 aa).

The interval 126-152 (TDTSKYTGSHKERFDESGKGKGKGGRE) is disordered. The span at 134–152 (SHKERFDESGKGKGKGGRE) shows a compositional bias: basic and acidic residues.

Belongs to the TPPP family.

It is found in the cytoplasm. The protein resides in the cytoskeleton. Its function is as follows. Regulator of microtubule dynamic that has microtubule bundling activity. This chain is Tubulin polymerization-promoting protein family member 3 (tppp3), found in Xenopus tropicalis (Western clawed frog).